A 360-amino-acid chain; its full sequence is MENQDTEQSQKRSGSEVEKDDFKRQKVVVPEGMTKREYKRQLKQQRWEETKDEYKQKKREKKKAARERRKERIKEAEANGETNEELYNYHQMKRAKVAPQEQIDTDVKIIMDCEFDSLMNDKEIVSLSNQITRSYSAKKHSTYDVQLDITSFNKNLKKRFEKAIPQYDKWTNVTFVENDKLEDILPMDDKQALSKYVYLTADTDEVIDTLEPHHTYIIGGIVDKNRYKNLCLNKAQSLGLKIGRLPIDKFIKMNGRQVLATSHVFELCCKWFENDKDWGKAFNEVLPPRKVKGKLTHGSDPEKSIEPSEVSEQPVSSEQSEQPVLSEQPVSSEQPVLSEQPVLSESSDEPSDEPSKGADH.

Residues 1 to 77 form a disordered region; it reads MENQDTEQSQ…RRKERIKEAE (77 aa). 2 stretches are compositionally biased toward basic and acidic residues: residues 8-24 and 33-55; these read QSQK…DFKR and MTKR…DEYK. The segment covering 56–67 has biased composition (basic residues); sequence QKKREKKKAARE. Residues 68–77 show a composition bias toward basic and acidic residues; it reads RRKERIKEAE. The region spanning 94 to 293 is the SAM-dependent MTase TRM10-type domain; that stretch reads RAKVAPQEQI…EVLPPRKVKG (200 aa). S-adenosyl-L-methionine is bound by residues 199–200, glycine 219, 223–227, cysteine 231, leucine 245, and 257–259; these read LT, DKNRY, and QVL. The active-site Proton acceptor is the aspartate 223. Residues 291-360 form a disordered region; that stretch reads VKGKLTHGSD…SDEPSKGADH (70 aa). Positions 297-306 are enriched in basic and acidic residues; that stretch reads HGSDPEKSIE. A compositionally biased stretch (low complexity) spans 307-324; it reads PSEVSEQPVSSEQSEQPV. Over residues 328–343 the composition is skewed to polar residues; sequence QPVSSEQPVLSEQPVL.

The protein belongs to the class IV-like SAM-binding methyltransferase superfamily. TRM10 family. In terms of assembly, monomer.

Its subcellular location is the cytoplasm. The protein resides in the nucleus. The catalysed reaction is guanosine(9) in tRNA + S-adenosyl-L-methionine = N(1)-methylguanosine(9) in tRNA + S-adenosyl-L-homocysteine + H(+). Functionally, S-adenosyl-L-methionine-dependent guanine N(1)-methyltransferase that catalyzes the formation of N(1)-methylguanine at position 9 (m1G9) in cytoplasmic tRNA. The polypeptide is tRNA (guanine(9)-N1)-methyltransferase (Debaryomyces hansenii (strain ATCC 36239 / CBS 767 / BCRC 21394 / JCM 1990 / NBRC 0083 / IGC 2968) (Yeast)).